Reading from the N-terminus, the 91-residue chain is Large ribosomal subunit protein bL28 (91 aa).

This sequence belongs to the bacterial ribosomal protein bL28 family.

The protein is Large ribosomal subunit protein bL28 of Protochlamydia amoebophila (strain UWE25).